A 361-amino-acid chain; its full sequence is tRNA-specific 2-thiouridylase MnmA (361 aa).

ATP contacts are provided by residues 11–18 (GMSGGVDS) and Met-37. An interaction with target base in tRNA region spans residues 97–99 (NPD). Cys-102 (nucleophile) is an active-site residue. The cysteines at positions 102 and 199 are disulfide-linked. Gly-126 contacts ATP. Positions 149 to 151 (KDQ) are interaction with tRNA. The Cysteine persulfide intermediate role is filled by Cys-199. The interval 311–312 (RY) is interaction with tRNA.

It belongs to the MnmA/TRMU family.

It localises to the cytoplasm. The catalysed reaction is S-sulfanyl-L-cysteinyl-[protein] + uridine(34) in tRNA + AH2 + ATP = 2-thiouridine(34) in tRNA + L-cysteinyl-[protein] + A + AMP + diphosphate + H(+). Functionally, catalyzes the 2-thiolation of uridine at the wobble position (U34) of tRNA, leading to the formation of s(2)U34. The polypeptide is tRNA-specific 2-thiouridylase MnmA (Cupriavidus necator (strain ATCC 17699 / DSM 428 / KCTC 22496 / NCIMB 10442 / H16 / Stanier 337) (Ralstonia eutropha)).